We begin with the raw amino-acid sequence, 320 residues long: MSSMPNHQKVVLVGDGAVGSSYAFAMAQQGIAEEFVIVDVVKDRTKGDALDLEDAQAFTAPKKIYSGEYSDCKDADLVVITAGAPQKPGESRLDLVNKNLNILSSIVKPVVDSGFDGIFLVAANPVDILTYATWKFSGFPKERVIGSGTSLDSSRLRVALGKQFNVDPRSVDAYIMGEHGDSEFAAYSTATIGTRPVRDVAKEQGVSDDDLAKLEDGVRNKAYDIINLKGATFYGIGTALMRISKAILRDENAVLPVGAYMDGQYGLNDIYIGTPAIIGGTGLKQIIESPLSADELKKMQDSAATLKKVLNDGLAELENK.

Residues valine 18, aspartate 39, arginine 44, tyrosine 69, and 83–84 (GA) contribute to the NAD(+) site. Substrate-binding residues include glutamine 86 and arginine 92. NAD(+) is bound by residues serine 105, 122 to 124 (AAN), and serine 147. Position 124 to 127 (124 to 127 (NPVD)) interacts with substrate. Position 152-155 (152-155 (DSSR)) interacts with substrate. Histidine 179 serves as the catalytic Proton acceptor. The residue at position 223 (tyrosine 223) is a Phosphotyrosine. Threonine 232 contacts substrate.

It belongs to the LDH/MDH superfamily. LDH family. In terms of assembly, homotetramer.

The protein resides in the cytoplasm. It catalyses the reaction (S)-lactate + NAD(+) = pyruvate + NADH + H(+). Its pathway is fermentation; pyruvate fermentation to lactate; (S)-lactate from pyruvate: step 1/1. With respect to regulation, the quaternary structure is constitutionally similar to the active conformation of allosteric LDHs, and the regulation is independent of the fructose 1,6-bisphosphate-binding site. Functionally, catalyzes the conversion of lactate to pyruvate. The chain is L-lactate dehydrogenase from Lactiplantibacillus pentosus (Lactobacillus pentosus).